Consider the following 255-residue polypeptide: Glioma pathogenesis-related protein 1 (255 aa).

Residues 1-17 (MQVILAVIVWMASSVSS) form the signal peptide. The SCP domain occupies 39–164 (QVHNQLRSKV…PNGANFICDY (126 aa)). Residues 224-244 (SLFLIAKSVLLLLSVIITIWV) form a helical membrane-spanning segment.

Belongs to the CRISP family.

Its subcellular location is the membrane. This chain is Glioma pathogenesis-related protein 1 (Glipr1), found in Mus musculus (Mouse).